A 388-amino-acid polypeptide reads, in one-letter code: S-adenosylmethionine synthase (388 aa).

H16 contributes to the ATP binding site. D18 contacts Mg(2+). Position 44 (E44) interacts with K(+). The L-methionine site is built by E57 and Q100. The flexible loop stretch occupies residues 100 to 110 (QSPEIAQGVDR). Residues 165-167 (DAK), D240, 246-247 (RK), A263, and K267 each bind ATP. L-methionine is bound at residue D240. L-methionine is bound at residue K271.

It belongs to the AdoMet synthase family. Homotetramer; dimer of dimers. It depends on Mg(2+) as a cofactor. K(+) serves as cofactor.

The protein localises to the cytoplasm. It carries out the reaction L-methionine + ATP + H2O = S-adenosyl-L-methionine + phosphate + diphosphate. Its pathway is amino-acid biosynthesis; S-adenosyl-L-methionine biosynthesis; S-adenosyl-L-methionine from L-methionine: step 1/1. Catalyzes the formation of S-adenosylmethionine (AdoMet) from methionine and ATP. The overall synthetic reaction is composed of two sequential steps, AdoMet formation and the subsequent tripolyphosphate hydrolysis which occurs prior to release of AdoMet from the enzyme. In Acinetobacter baylyi (strain ATCC 33305 / BD413 / ADP1), this protein is S-adenosylmethionine synthase.